A 178-amino-acid chain; its full sequence is Actin-related protein 2/3 complex subunit 3-B (178 aa).

It belongs to the ARPC3 family. Component of the Arp2/3 complex composed of actr2/arp2, actr3/arp3, arpc1 (arpc1a or arpc1b), arpc2, arpc3, arpc4 and arpc5.

The protein resides in the cytoplasm. Its subcellular location is the cytoskeleton. It is found in the cell projection. The protein localises to the nucleus. Functionally, component of the Arp2/3 complex, a multiprotein complex that mediates actin polymerization upon stimulation by nucleation-promoting factor (NPF). The Arp2/3 complex mediates the formation of branched actin networks in the cytoplasm, providing the force for cell motility. In addition to its role in the cytoplasmic cytoskeleton, the Arp2/3 complex also promotes actin polymerization in the nucleus, thereby regulating gene transcription and repair of damaged DNA. The Arp2/3 complex promotes homologous recombination (HR) repair in response to DNA damage by promoting nuclear actin polymerization, leading to drive motility of double-strand breaks (DSBs). This Xenopus laevis (African clawed frog) protein is Actin-related protein 2/3 complex subunit 3-B (arpc3-b).